The sequence spans 423 residues: UPF0597 protein TTE0269 (423 aa).

It belongs to the UPF0597 family.

In Caldanaerobacter subterraneus subsp. tengcongensis (strain DSM 15242 / JCM 11007 / NBRC 100824 / MB4) (Thermoanaerobacter tengcongensis), this protein is UPF0597 protein TTE0269.